The sequence spans 360 residues: Histidinol-phosphate aminotransferase (360 aa).

N6-(pyridoxal phosphate)lysine is present on lysine 208.

This sequence belongs to the class-II pyridoxal-phosphate-dependent aminotransferase family. Histidinol-phosphate aminotransferase subfamily. In terms of assembly, homodimer. Pyridoxal 5'-phosphate serves as cofactor.

It carries out the reaction L-histidinol phosphate + 2-oxoglutarate = 3-(imidazol-4-yl)-2-oxopropyl phosphate + L-glutamate. Its pathway is amino-acid biosynthesis; L-histidine biosynthesis; L-histidine from 5-phospho-alpha-D-ribose 1-diphosphate: step 7/9. This Lactococcus lactis subsp. lactis (strain IL1403) (Streptococcus lactis) protein is Histidinol-phosphate aminotransferase (hisC).